A 145-amino-acid chain; its full sequence is Large ribosomal subunit protein cL37 (145 aa).

The N-terminal 63 residues, 1-63, are a transit peptide targeting the chloroplast; sequence MALLCFNSFT…PRKNSIFIAS (63 aa). Residues 125–145 form a disordered region; it reads KRRLRKKGNWPPSKMKKLEGV.

The protein belongs to the chloroplast-specific ribosomal protein cL37 family. As to quaternary structure, part of the 50S ribosomal subunit.

It is found in the plastid. The protein resides in the chloroplast. The chain is Large ribosomal subunit protein cL37 (PSRP5) from Pisum sativum (Garden pea).